Reading from the N-terminus, the 555-residue chain is Luciferin 2-monooxygenase (555 aa).

The N-terminal stretch at 1-11 (MKIIILSVILA) is a signal peptide. 2 VWFD domains span residues 80 to 266 (IECR…EYCK) and 319 to 494 (GTCV…RLCN). 4 cysteine pairs are disulfide-bonded: Cys-82-Cys-222, Cys-321-Cys-454, Cys-343-Cys-493, and Cys-352-Cys-451. Residues Asn-186 and Asn-408 are each glycosylated (N-linked (GlcNAc...) asparagine).

Post-translationally, the cysteine residues presumably exist in intramolecular disulfide bridges. The N-terminus is blocked.

The catalysed reaction is Cypridina luciferin + O2 = oxidized Cypridina luciferin + hnu + CO2. This Vargula hilgendorfii (Sea firefly) protein is Luciferin 2-monooxygenase.